A 351-amino-acid chain; its full sequence is Quinolinate phosphoribosyltransferase [decarboxylating] 2a, mitochondrial (351 aa).

Substrate contacts are provided by residues Arg142, 173-175 (TRK), Arg197, Lys207, Glu240, Asp267, 299-301 (SGN), and 320-322 (SGA).

It belongs to the NadC/ModD family. As to expression, expressed in roots and flowers.

The protein resides in the mitochondrion. The enzyme catalyses nicotinate beta-D-ribonucleotide + CO2 + diphosphate = quinolinate + 5-phospho-alpha-D-ribose 1-diphosphate + 2 H(+). It participates in alkaloid biosynthesis; nicotine biosynthesis. Its pathway is cofactor biosynthesis; NAD(+) biosynthesis; nicotinate D-ribonucleotide from quinolinate: step 1/1. Involved in the biosynthesis of pyridine alkaloid natural products, leading mainly to the production of anabasine, anatabine, nicotine and nornicotine, effective deterrents against herbivores with antiparasitic and pesticide properties (neurotoxins); nornicotine serves as the precursor in the synthesis of the carcinogen compound N'-nitrosonornicotine (NNN). Involved in the catabolism of quinolinic acid (QA). The sequence is that of Quinolinate phosphoribosyltransferase [decarboxylating] 2a, mitochondrial from Nicotiana tabacum (Common tobacco).